A 196-amino-acid chain; its full sequence is ATP-dependent Clp protease proteolytic subunit (196 aa).

Residue S96 is the Nucleophile of the active site. H121 is an active-site residue.

This sequence belongs to the peptidase S14 family. As to quaternary structure, fourteen ClpP subunits assemble into 2 heptameric rings which stack back to back to give a disk-like structure with a central cavity, resembling the structure of eukaryotic proteasomes.

It localises to the cytoplasm. It carries out the reaction Hydrolysis of proteins to small peptides in the presence of ATP and magnesium. alpha-casein is the usual test substrate. In the absence of ATP, only oligopeptides shorter than five residues are hydrolyzed (such as succinyl-Leu-Tyr-|-NHMec, and Leu-Tyr-Leu-|-Tyr-Trp, in which cleavage of the -Tyr-|-Leu- and -Tyr-|-Trp bonds also occurs).. Its function is as follows. Cleaves peptides in various proteins in a process that requires ATP hydrolysis. Has a chymotrypsin-like activity. Plays a major role in the degradation of misfolded proteins. This Streptococcus pyogenes serotype M3 (strain SSI-1) protein is ATP-dependent Clp protease proteolytic subunit.